The sequence spans 227 residues: MNIRMGIDKEDLKKFLKDLEIISLPDKKKREILIRSLQMIKRQAVKSAANQRNPMGGSWKKRKNGTAKMLRRIAKLANSKAEKAQGTLFYKQKRTGEIAQEHQEGIPHLFKKTEFTGKNKGGIGADPCTLRQAKKLKDLGYTVANGKTKNGKAKRRKPTLSEIRSTLSRAKASLIIRKLEEKNGMNPSRHLTQWIIPTEKRSFLDTREEENAKIILAEIQKYTQKQQ.

This is an uncharacterized protein from Haemophilus influenzae (Bacteriophage HP1).